The following is a 251-amino-acid chain: 3-deoxy-manno-octulosonate cytidylyltransferase (251 aa).

This sequence belongs to the KdsB family.

The protein localises to the cytoplasm. It catalyses the reaction 3-deoxy-alpha-D-manno-oct-2-ulosonate + CTP = CMP-3-deoxy-beta-D-manno-octulosonate + diphosphate. Its pathway is nucleotide-sugar biosynthesis; CMP-3-deoxy-D-manno-octulosonate biosynthesis; CMP-3-deoxy-D-manno-octulosonate from 3-deoxy-D-manno-octulosonate and CTP: step 1/1. The protein operates within bacterial outer membrane biogenesis; lipopolysaccharide biosynthesis. Activates KDO (a required 8-carbon sugar) for incorporation into bacterial lipopolysaccharide in Gram-negative bacteria. In Parabacteroides distasonis (strain ATCC 8503 / DSM 20701 / CIP 104284 / JCM 5825 / NCTC 11152), this protein is 3-deoxy-manno-octulosonate cytidylyltransferase.